The chain runs to 247 residues: Small ribosomal subunit protein uS3 (247 aa).

The 73-residue stretch at 39–111 (IYDFFDKKVR…NISIQVIELK (73 aa)) folds into the KH type-2 domain. The disordered stretch occupies residues 221 to 247 (EEMDLLNAPKDRRVRRGGERHASTKKN). The span at 236-247 (RGGERHASTKKN) shows a compositional bias: basic and acidic residues.

This sequence belongs to the universal ribosomal protein uS3 family. As to quaternary structure, part of the 30S ribosomal subunit. Forms a tight complex with proteins S10 and S14.

Binds the lower part of the 30S subunit head. Binds mRNA in the 70S ribosome, positioning it for translation. This chain is Small ribosomal subunit protein uS3, found in Metamycoplasma arthritidis (strain 158L3-1) (Mycoplasma arthritidis).